We begin with the raw amino-acid sequence, 267 residues long: Probable aquaporin TIP3-2 (267 aa).

M1 carries the N-acetylmethionine modification. N-acetylalanine; in Probable aquaporin TIP3-2, N-terminally processed is present on A2. The Cytoplasmic portion of the chain corresponds to 2–26 (ATSARRAYGFGRADEATHPDSIRAT). Residues 27-47 (LAEFLSTFVFVFAGEGSILAL) traverse the membrane as a helical segment. Over 48–66 (DKLYWDTAAHTGTNTPGGL) the chain is Vacuolar. The chain crosses the membrane as a helical span at residues 67-87 (VLVALAHALALFAAVSAAINV). At 88 to 110 (SGGHVNPAVTFAALIGGRISVIR) the chain is on the cytoplasmic side. The short motif at 93–95 (NPA) is the NPA 1 element. Residues 111–131 (AIYYWVAQLIGAILACLLLRL) form a helical membrane-spanning segment. At 132–151 (ATNGLRPVGFHVASGVSELH) the chain is on the vacuolar side. The helical transmembrane segment at 152 to 172 (GLLMEIILTFALVYVVYSTAI) threads the bilayer. Topologically, residues 173-178 (DPKRGS) are cytoplasmic. A helical transmembrane segment spans residues 179–199 (IGIIAPLAIGLIVGANILVGG). At 200–226 (PFDGASMNPARAFGPALVGWRWSNHWI) the chain is on the vacuolar side. The NPA 2 motif lies at 207–209 (NPA). The helical transmembrane segment at 227–247 (YWVGPFIGGALAALIYEYMII) threads the bilayer. Residues 248–267 (PSVNEPPHHSTHQPLAPEDY) lie on the Cytoplasmic side of the membrane.

The protein belongs to the MIP/aquaporin (TC 1.A.8) family. TIP (TC 1.A.8.10) subfamily. As to expression, predominantly expressed in developing seeds. Also expressed in rosette leaves.

The protein resides in the vacuole membrane. Aquaporins facilitate the transport of water and small neutral solutes across cell membranes. The protein is Probable aquaporin TIP3-2 (TIP3-2) of Arabidopsis thaliana (Mouse-ear cress).